The sequence spans 349 residues: Dihydroorotate dehydrogenase (quinone) (349 aa).

Residues 59 to 63 (PGFDK) and threonine 83 each bind FMN. Lysine 63 lines the substrate pocket. 108–112 (NRMGF) serves as a coordination point for substrate. 2 residues coordinate FMN: asparagine 142 and asparagine 173. Residue asparagine 173 participates in substrate binding. Serine 176 serves as the catalytic Nucleophile. Residue asparagine 178 coordinates substrate. Lysine 212 and serine 240 together coordinate FMN. 241 to 242 (NT) serves as a coordination point for substrate. Residues glycine 262, glycine 291, and 312-313 (YS) contribute to the FMN site.

It belongs to the dihydroorotate dehydrogenase family. Type 2 subfamily. Monomer. FMN serves as cofactor.

The protein localises to the cell membrane. The catalysed reaction is (S)-dihydroorotate + a quinone = orotate + a quinol. It participates in pyrimidine metabolism; UMP biosynthesis via de novo pathway; orotate from (S)-dihydroorotate (quinone route): step 1/1. Functionally, catalyzes the conversion of dihydroorotate to orotate with quinone as electron acceptor. This is Dihydroorotate dehydrogenase (quinone) from Novosphingobium aromaticivorans (strain ATCC 700278 / DSM 12444 / CCUG 56034 / CIP 105152 / NBRC 16084 / F199).